Here is a 261-residue protein sequence, read N- to C-terminus: Kallikrein-1E2 (261 aa).

An N-terminal signal peptide occupies residues 1–17 (MWFLVLCLDLSLGETGA). The propeptide at 18–24 (LPPIQSR) is activation peptide. In terms of domain architecture, Peptidase S1 spans 25-258 (IIGGWECEKH…HLKWIKETIE (234 aa)). Disulfide bonds link Cys-31/Cys-173, Cys-50/Cys-66, Cys-152/Cys-219, Cys-184/Cys-198, and Cys-209/Cys-234. His-65 acts as the Charge relay system in catalysis. Asn-79 carries N-linked (GlcNAc...) asparagine glycosylation. Asp-120 acts as the Charge relay system in catalysis. The Charge relay system role is filled by Ser-213.

The protein belongs to the peptidase S1 family. Kallikrein subfamily. As to expression, detected in prostate and semen.

It localises to the secreted. The enzyme catalyses Preferential cleavage of Arg-|-Xaa bonds in small molecule substrates. Highly selective action to release kallidin (lysyl-bradykinin) from kininogen involves hydrolysis of Met-|-Xaa or Leu-|-Xaa.. Glandular kallikreins cleave Met-Lys and Arg-Ser bonds in kininogen to release Lys-bradykinin. This chain is Kallikrein-1E2 (KLK1E2), found in Equus caballus (Horse).